The primary structure comprises 195 residues: Imidazoleglycerol-phosphate dehydratase (195 aa).

This sequence belongs to the imidazoleglycerol-phosphate dehydratase family.

It is found in the cytoplasm. It carries out the reaction D-erythro-1-(imidazol-4-yl)glycerol 3-phosphate = 3-(imidazol-4-yl)-2-oxopropyl phosphate + H2O. Its pathway is amino-acid biosynthesis; L-histidine biosynthesis; L-histidine from 5-phospho-alpha-D-ribose 1-diphosphate: step 6/9. This chain is Imidazoleglycerol-phosphate dehydratase, found in Thiobacillus denitrificans (strain ATCC 25259 / T1).